A 444-amino-acid polypeptide reads, in one-letter code: 3-phosphoshikimate 1-carboxyvinyltransferase (444 aa).

The 3-phosphoshikimate site is built by lysine 24, serine 25, and arginine 29. Lysine 24 provides a ligand contact to phosphoenolpyruvate. Residues glycine 97 and arginine 125 each contribute to the phosphoenolpyruvate site. Residues serine 170, glutamine 172, aspartate 318, and lysine 345 each coordinate 3-phosphoshikimate. A phosphoenolpyruvate-binding site is contributed by glutamine 172. The Proton acceptor role is filled by aspartate 318. 2 residues coordinate phosphoenolpyruvate: arginine 349 and arginine 391.

It belongs to the EPSP synthase family. Monomer.

Its subcellular location is the cytoplasm. It carries out the reaction 3-phosphoshikimate + phosphoenolpyruvate = 5-O-(1-carboxyvinyl)-3-phosphoshikimate + phosphate. The protein operates within metabolic intermediate biosynthesis; chorismate biosynthesis; chorismate from D-erythrose 4-phosphate and phosphoenolpyruvate: step 6/7. In terms of biological role, catalyzes the transfer of the enolpyruvyl moiety of phosphoenolpyruvate (PEP) to the 5-hydroxyl of shikimate-3-phosphate (S3P) to produce enolpyruvyl shikimate-3-phosphate and inorganic phosphate. In Halorhodospira halophila (strain DSM 244 / SL1) (Ectothiorhodospira halophila (strain DSM 244 / SL1)), this protein is 3-phosphoshikimate 1-carboxyvinyltransferase.